A 469-amino-acid chain; its full sequence is Protein RUFY3 (469 aa).

2 positions are modified to phosphothreonine: T5 and T12. Phosphoserine occurs at positions 34 and 49. T51 is subject to Phosphothreonine. Residues 95–227 form the RUN domain; sequence DSDYAPLQQF…IDANFCMKGE (133 aa). Coiled-coil stretches lie at residues 271–362 and 422–463; these read NRHL…VEKE and KSEL…AANK.

In terms of assembly, interacts with PAK1. Interacts (via C-terminus) with Ras-related Rab-5 proteins. Interacts (via C-terminus) with Ras-related Rap-2 proteins. Interacts with PIK3CA and PIK3R1. Interacts (via N-terminus) with FSCN1; this interaction induces neuron axon development. Interacts with DBN1. Interacts (via the second coiled coil) with GTP-, but not GDP-bound ARL8A and ARL8B. Interacts with dynactin/DCTN1 and the dynein intermediate chain DYNC1I1/2. Directly interacts with DYNC1LI1. Post-translationally, phosphorylated by PAK1. Isoform 1 is partially phosphorylated. As to expression, overexpressed in gastric cancer cells and tissues (at protein level).

The protein resides in the cytoplasm. It is found in the endomembrane system. Its subcellular location is the cell projection. The protein localises to the invadopodium. It localises to the perikaryon. The protein resides in the growth cone. It is found in the filopodium. Its subcellular location is the lamellipodium. The protein localises to the lysosome. Its function is as follows. ARL8 effector that promotes the coupling of endolysosomes to dynein-dynactin for retrograde transport along microtubules. Acts by binding both GTP-bound ARL8 and dynein-dynactin. In nonneuronal cells, promotes concentration of endolysosomes in the juxtanuclear area. In hippocampal neurons, drives retrograde transport of endolysosomes from the axon to the soma. Plays a role in the generation of neuronal polarity formation and axon growth. Implicated in the formation of a single axon by developing neurons. May inhibit the formation of additional axons by inhibition of PI3K in minor neuronal processes. Plays a role in the formation of F-actin-enriched protrusive structures at the cell periphery. Plays a role in cytoskeletal organization by regulating the subcellular localization of FSCN1 and DBN1 at axonal growth cones. The protein is Protein RUFY3 of Homo sapiens (Human).